The sequence spans 130 residues: DNA-directed RNA polymerase subunit omega (130 aa).

Residues 109-130 (EEELLKGLEGLAPPEEQPEEDE) are disordered.

This sequence belongs to the RNA polymerase subunit omega family. As to quaternary structure, the RNAP catalytic core consists of 2 alpha, 1 beta, 1 beta' and 1 omega subunit. When a sigma factor is associated with the core the holoenzyme is formed, which can initiate transcription.

It catalyses the reaction RNA(n) + a ribonucleoside 5'-triphosphate = RNA(n+1) + diphosphate. Its function is as follows. Promotes RNA polymerase assembly. Latches the N- and C-terminal regions of the beta' subunit thereby facilitating its interaction with the beta and alpha subunits. The sequence is that of DNA-directed RNA polymerase subunit omega from Rhodopseudomonas palustris (strain BisA53).